The sequence spans 244 residues: Probable transcriptional regulatory protein XfasM23_0940 (244 aa).

It belongs to the TACO1 family.

It is found in the cytoplasm. This chain is Probable transcriptional regulatory protein XfasM23_0940, found in Xylella fastidiosa (strain M23).